Reading from the N-terminus, the 550-residue chain is CTP synthase (550 aa).

Residues 1–270 (MTKFVFVTGG…DRLICEELRL (270 aa)) form an amidoligase domain region. Ser13 contacts CTP. Ser13 is a UTP binding site. ATP contacts are provided by residues 14–19 (SLGKGI) and Asp71. The Mg(2+) site is built by Asp71 and Glu144. Residues 151-153 (DIE), 191-196 (KTKPTQ), and Lys227 contribute to the CTP site. UTP contacts are provided by residues 191–196 (KTKPTQ) and Lys227. A Glutamine amidotransferase type-1 domain is found at 295-547 (TIGMVGKYVD…VEAALASQQR (253 aa)). Gly356 is a binding site for L-glutamine. Cys383 (nucleophile; for glutamine hydrolysis) is an active-site residue. Residues 384–387 (LGMQ), Glu407, and Arg473 each bind L-glutamine. Residues His520 and Glu522 contribute to the active site.

Belongs to the CTP synthase family. In terms of assembly, homotetramer.

The catalysed reaction is UTP + L-glutamine + ATP + H2O = CTP + L-glutamate + ADP + phosphate + 2 H(+). It catalyses the reaction L-glutamine + H2O = L-glutamate + NH4(+). The enzyme catalyses UTP + NH4(+) + ATP = CTP + ADP + phosphate + 2 H(+). It functions in the pathway pyrimidine metabolism; CTP biosynthesis via de novo pathway; CTP from UDP: step 2/2. Its activity is regulated as follows. Allosterically activated by GTP, when glutamine is the substrate; GTP has no effect on the reaction when ammonia is the substrate. The allosteric effector GTP functions by stabilizing the protein conformation that binds the tetrahedral intermediate(s) formed during glutamine hydrolysis. Inhibited by the product CTP, via allosteric rather than competitive inhibition. Its function is as follows. Catalyzes the ATP-dependent amination of UTP to CTP with either L-glutamine or ammonia as the source of nitrogen. Regulates intracellular CTP levels through interactions with the four ribonucleotide triphosphates. The chain is CTP synthase from Cupriavidus necator (strain ATCC 17699 / DSM 428 / KCTC 22496 / NCIMB 10442 / H16 / Stanier 337) (Ralstonia eutropha).